The sequence spans 93 residues: Small ribosomal subunit protein uS19 (93 aa).

It belongs to the universal ribosomal protein uS19 family.

In terms of biological role, protein S19 forms a complex with S13 that binds strongly to the 16S ribosomal RNA. In Ruminiclostridium cellulolyticum (strain ATCC 35319 / DSM 5812 / JCM 6584 / H10) (Clostridium cellulolyticum), this protein is Small ribosomal subunit protein uS19.